We begin with the raw amino-acid sequence, 413 residues long: Heparan-sulfate 6-O-sulfotransferase 1-A (413 aa).

Over 9–15 (MVERSSK) the chain is Cytoplasmic. The chain crosses the membrane as a helical; Signal-anchor for type II membrane protein span at residues 16–36 (FLFIVVGSVLFMLILYQYVAP). The Lumenal segment spans residues 37–413 (GMMNFGSPHG…DYMNHIINRW (377 aa)). Residue 92–100 (HIQKTGGTT) participates in 3'-phosphoadenylyl sulfate binding. Substrate is bound by residues 122–123 (KK), R139, W144, and H149. Residue H149 is the Proton acceptor of the active site. The 3'-phosphoadenylyl sulfate site is built by R183 and S191. Positions 195 and 202 each coordinate substrate. N-linked (GlcNAc...) asparagine glycosylation occurs at N262. A 3'-phosphoadenylyl sulfate-binding site is contributed by 315-317 (MQY). An N-linked (GlcNAc...) asparagine glycan is attached at N318. 321-322 (RA) provides a ligand contact to 3'-phosphoadenylyl sulfate. N329 is a glycosylation site (N-linked (GlcNAc...) asparagine). A disordered region spans residues 374–401 (PLFPFRRTSSSDSTFRDDAPESEGSRLP).

It belongs to the sulfotransferase 6 family. As to expression, during somitogenesis, first expressed in polster and presumptive forebrain. During mid-somitogenesis, expressed in eye, hindbrain and anterior spinal cord. During late somitogenesis, strong expression in eye and hindbrain, decreased levels in midbrain and anterior spinal cord. At 24 hours post-fertilization (hpf), expressed in neural retina and lens, brain and anterior spinal cord. At 36 hpf, retinal expression is confined to the ciliary marginal zone and there is strong expression in tectum, rhombomeres and otic vesicle. At 48 hpf, expressed in retinal ganglion cells and in tectum, rhombomeres and pectoral fin. Not detected in the vasculature during embryogenesis.

The protein localises to the membrane. It carries out the reaction alpha-D-glucosaminyl-[heparan sulfate](n) + 3'-phosphoadenylyl sulfate = 6-sulfo-alpha-D-glucosaminyl-[heparan sulfate](n) + adenosine 3',5'-bisphosphate + H(+). Its function is as follows. 6-O-sulfation enzyme which catalyzes the transfer of sulfate from 3'-phosphoadenosine 5'-phosphosulfate (PAPS) to position 6 of the N-sulfoglucosamine residue (GlcNS) of heparan sulfate. This Danio rerio (Zebrafish) protein is Heparan-sulfate 6-O-sulfotransferase 1-A.